Here is a 150-residue protein sequence, read N- to C-terminus: Nucleoside diphosphate kinase (150 aa).

Lys-9, Phe-57, Arg-85, Thr-91, Arg-102, and Asn-112 together coordinate ATP. His-115 acts as the Pros-phosphohistidine intermediate in catalysis.

This sequence belongs to the NDK family. Homotetramer. Mg(2+) is required as a cofactor.

It localises to the cytoplasm. It catalyses the reaction a 2'-deoxyribonucleoside 5'-diphosphate + ATP = a 2'-deoxyribonucleoside 5'-triphosphate + ADP. The catalysed reaction is a ribonucleoside 5'-diphosphate + ATP = a ribonucleoside 5'-triphosphate + ADP. Major role in the synthesis of nucleoside triphosphates other than ATP. The ATP gamma phosphate is transferred to the NDP beta phosphate via a ping-pong mechanism, using a phosphorylated active-site intermediate. This Thermosynechococcus vestitus (strain NIES-2133 / IAM M-273 / BP-1) protein is Nucleoside diphosphate kinase.